The chain runs to 354 residues: F-box/kelch-repeat protein At1g80440 (354 aa).

Positions 2–49 (ELIPNLPDDVARECLLRSSYQQFPVIASVCRAWNREVSLSQFLHQRKA) constitute an F-box domain. Kelch repeat units lie at residues 63-110 (RVDP…CRLV), 115-163 (DLIV…ASDS), 166-213 (TVLV…FHAG), and 215-263 (FHVI…PPTC).

This chain is F-box/kelch-repeat protein At1g80440, found in Arabidopsis thaliana (Mouse-ear cress).